A 122-amino-acid polypeptide reads, in one-letter code: Basic phospholipase A2 (122 aa).

7 disulfides stabilise this stretch: C26/C115, C28/C44, C43/C95, C49/C122, C50/C88, C57/C81, and C75/C86. 3 residues coordinate Ca(2+): Y27, G29, and G31. The active site involves H47. D48 contacts Ca(2+). Residue D89 is part of the active site.

It belongs to the phospholipase A2 family. Group II subfamily. D49 sub-subfamily. The cofactor is Ca(2+). In terms of tissue distribution, expressed by the venom gland.

The protein localises to the secreted. The catalysed reaction is a 1,2-diacyl-sn-glycero-3-phosphocholine + H2O = a 1-acyl-sn-glycero-3-phosphocholine + a fatty acid + H(+). In terms of biological role, snake venom phospholipase A2 (PLA2) that does not inhibit platelet aggregation. Exhibits cytotoxic and anticoagulant activity. Induces Ehrlich tumor growth but not angiogenesis. PLA2 catalyzes the calcium-dependent hydrolysis of the 2-acyl groups in 3-sn-phosphoglycerides. The polypeptide is Basic phospholipase A2 (Bothrops leucurus (Whitetail lancehead)).